The primary structure comprises 256 residues: Trans-aconitate 2-methyltransferase (256 aa).

This sequence belongs to the methyltransferase superfamily. Tam family.

The protein resides in the cytoplasm. The enzyme catalyses trans-aconitate + S-adenosyl-L-methionine = (E)-3-(methoxycarbonyl)pent-2-enedioate + S-adenosyl-L-homocysteine. Catalyzes the S-adenosylmethionine monomethyl esterification of trans-aconitate. The chain is Trans-aconitate 2-methyltransferase from Rhodopseudomonas palustris (strain BisB5).